Reading from the N-terminus, the 1650-residue chain is Phosphatidylinositol 3,4,5-trisphosphate-dependent Rac exchanger 1 protein (1650 aa).

The span at 1-19 (MEAPGSGGGDGGGDPGGDG) shows a compositional bias: gly residues. The interval 1–33 (MEAPGSGGGDGGGDPGGDGAHPDARGPVSGPCA) is disordered. A DH domain is found at 44-235 (LRLCVLNEIL…KTVCSNINET (192 aa)). The region spanning 266 to 387 (ELLLQGNLLK…WLDALIRERE (122 aa)) is the PH domain. Ser314 carries the post-translational modification Phosphoserine. DEP domains follow at residues 416–491 (MSKK…RFRY) and 518–592 (SLYA…RFHA). A PDZ domain is found at 620–698 (RLLIPPQEDD…SRRPLRLLVA (79 aa)). The tract at residues 793–813 (ARASQGAPDEDPQEDDQPDSA) is disordered. The span at 800-810 (PDEDPQEDDQP) shows a compositional bias: acidic residues. Ser991 bears the Phosphoserine mark. 2 disordered regions span residues 1022-1047 (SPAV…GAPS) and 1099-1129 (PTSA…EVDR). Residues 1030–1047 (QGQGLNDSSYGSASGAPS) are compositionally biased toward polar residues. The segment covering 1109–1122 (PSLVEETSSSPPVS) has biased composition (low complexity). Phosphoserine is present on residues Ser1186 and Ser1191.

Interacts preferentially with RAC2. Interacts with RAC1. Interacts with AUTS2.

It is found in the cytoplasm. The protein resides in the cytosol. The protein localises to the cell membrane. Its function is as follows. Functions as a RAC guanine nucleotide exchange factor (GEF), which activates the Rac proteins by exchanging bound GDP for free GTP. Its activity is synergistically activated by phosphatidylinositol 3,4,5-trisphosphate and the beta gamma subunits of heterotrimeric G protein. May function downstream of heterotrimeric G proteins in neutrophils. In Mus musculus (Mouse), this protein is Phosphatidylinositol 3,4,5-trisphosphate-dependent Rac exchanger 1 protein (Prex1).